The chain runs to 409 residues: Tetracenomycin polyketide synthase ketoacyl synthase beta subunit (409 aa).

Residues 4 to 407 (PAPVVVTGLG…GFNSALVVRR (404 aa)) enclose the Ketosynthase family 3 (KS3) domain.

The protein belongs to the thiolase-like superfamily. Beta-ketoacyl-ACP synthases family. In terms of assembly, the tetracenomycin polyketide synthase (TCM PKS) is composed of a ketosynthase complex (TcmKL), an acyl carrier protein (TcmM), a cyclase (TcmN) and a probable second cyclase (TcmJ). TcmK and TcmL form a heterodimeric complex.

It carries out the reaction 10 malonyl-CoA + 8 H(+) = tetracenomycin F2 + 10 CO2 + 10 CoA + 2 H2O. The protein operates within antibiotic biosynthesis; tetracenomycin C biosynthesis. In terms of biological role, involved in the biosynthesis of tetracenomycin C (TCM C). Part of a type II polyketide synthase (PKS) that catalyzes the synthesis of tetracenomycin F2 (TCM F2), a precursor of TCM C, from malonyl-CoA. TcmK and TcmL form a heterodimeric alpha-beta complex that catalyzes the condensation reactions between the growing acyl-enzyme chain and the malonyl-CoA extender units. This is Tetracenomycin polyketide synthase ketoacyl synthase beta subunit from Streptomyces glaucescens.